We begin with the raw amino-acid sequence, 324 residues long: Glyoxylate/hydroxypyruvate reductase B (324 aa).

Residues Arg237 and Glu266 contribute to the active site. His285 serves as the catalytic Proton donor.

Belongs to the D-isomer specific 2-hydroxyacid dehydrogenase family. GhrB subfamily. Homodimer.

It is found in the cytoplasm. The catalysed reaction is glycolate + NADP(+) = glyoxylate + NADPH + H(+). The enzyme catalyses (R)-glycerate + NAD(+) = 3-hydroxypyruvate + NADH + H(+). It carries out the reaction (R)-glycerate + NADP(+) = 3-hydroxypyruvate + NADPH + H(+). Its function is as follows. Catalyzes the NADPH-dependent reduction of glyoxylate and hydroxypyruvate into glycolate and glycerate, respectively. This chain is Glyoxylate/hydroxypyruvate reductase B, found in Cronobacter sakazakii (strain ATCC BAA-894) (Enterobacter sakazakii).